Here is a 319-residue protein sequence, read N- to C-terminus: Large ribosomal subunit protein uL29m (319 aa).

The disordered stretch occupies residues 1-55; it reads MWKRSFHSQGGPLRARTKFTKPKPKQPVLPKDKIRPPTQLTHHSNNLRITEPIPP. Residues 15–24 show a composition bias toward basic residues; sequence ARTKFTKPKP. A compositionally biased stretch (polar residues) spans 38-48; it reads TQLTHHSNNLR.

It belongs to the universal ribosomal protein uL29 family. Component of the mitochondrial large ribosomal subunit. Mature mitochondrial ribosomes consist of a small (37S) and a large (54S) subunit. The 37S subunit contains at least 33 different proteins and 1 molecule of RNA (15S). The 54S subunit contains at least 45 different proteins and 1 molecule of RNA (21S).

Its subcellular location is the mitochondrion. The sequence is that of Large ribosomal subunit protein uL29m (MRPL4) from Saccharomyces cerevisiae (strain YJM789) (Baker's yeast).